Here is a 180-residue protein sequence, read N- to C-terminus: Vacuolar ATPase assembly protein VMA22 (180 aa).

Positions 16-37 (QLLGDLEELEGKRTVLNARVEE) form a coiled coil. Basic and acidic residues predominate over residues 92 to 101 (EEVGPREAGL). Residues 92 to 122 (EEVGPREAGLRRRKGPTKTPEPESSEAPQDP) form a disordered region. The stretch at 153-176 (SLQNRIDWGRSQLRGLQEKLKQLE) forms a coiled coil.

As to quaternary structure, accessory component of the multisubunit proton-transporting vacuolar (V)-ATPase protein pump. As to expression, expressed throughout the brain.

The protein localises to the endosome. Its subcellular location is the lysosome. The protein resides in the endoplasmic reticulum-Golgi intermediate compartment. It is found in the cytoplasmic vesicle. It localises to the COPI-coated vesicle. The protein localises to the endoplasmic reticulum. In terms of biological role, accessory component of the proton-transporting vacuolar (V)-ATPase protein pump involved in intracellular iron homeostasis. In aerobic conditions, required for intracellular iron homeostasis, thus triggering the activity of Fe(2+) prolyl hydroxylase (PHD) enzymes, and leading to HIF1A hydroxylation and subsequent proteasomal degradation. Necessary for endolysosomal acidification and lysosomal degradation. May be involved in Golgi homeostasis. This Homo sapiens (Human) protein is Vacuolar ATPase assembly protein VMA22.